The chain runs to 1094 residues: MATEAAPPRIAVRLPSTSVRDAGANYRIARYVAVVAGLLGAVLAIATPLLPVNQTTAQLNWPQNGTFASVEAPLIGYVATDLNITVPCQAAAGLAGSQNTGKTVLLSTVPKQAPKAVDRGLLLQRANDDLVLVVRNVPLVTAPLSQVLGPTCQRLTFTAHADRVAAEFVGLVQGPNAEHPGAPLRGERSGYDFRPQIVGVFTDLAGPAPPGLSFSASVDTRYSSSPTPLKMAAMILGVALTGAALVALHILDTADGMRHRRFLPARWWSTGGLDTLVIAVLVWWHFVGANTSDDGYILTMARVSEHAGYMANYYRWFGTPEAPFGWYYDLLALWAHVSTASIWMRLPTLAMALTCWWVISREVIPRLGHAVKTSRAAAWTAAGMFLAVWLPLDNGLRPEPIIALGILLTWCSVERAVATSRLLPVAIACIIGALTLFSGPTGIASIGALLVAIGPLRTILHRRSRRFGVLPLVAPILAAATVTAIPIFRDQTFAGEIQANLLKRAVGPSLKWFDEHIRYERLFMASPDGSIARRFAVLALVLALAVSVAMSLRKGRIPGTAAGPSRRIIGITIISFLAMMFTPTKWTHHFGVFAGLAGSLGALAAVAVTGAAMRSRRNRTVFAAVVVFVLALSFASVNGWWYVSNFGVPWSNSFPKWRWSLTTALLELTVLVLLLAAWFHFVANGDGRRTARPTRFRARLAGIVQSPLAIATWLLVLFEVVSLTQAMISQYPAWSVGRSNLQALAGKTCGLAEDVLVELDPNAGMLAPVTAPLADALGAGLSEAFTPNGIPADVTADPVMERPGDRSFLNDDGLITGSEPGTEGGTTAAPGINGSRARLPYNLDPARTPVLGSWRAGVQVPAMLRSGWYRLPTNEQRDRAPLLVVTAAGRFDSREVRLQWATDEQAAAGHHGGSMEFADVGAAPAWRNLRAPLSAIPSTATQVRLVADDQDLAPQHWIALTPPRIPRVRTLQNVVGAADPLFLDWLVGLAFPCQRPFGHQYGVDETPKWRILPDRFGAEANSPVMDHNGGGPLGITELLMRATTVASYLKDDWFRDWGALQRLTPYYPDAQPADLNLGTVTRSGLWSPAPLRRG.

13 helical membrane-spanning segments follow: residues 28–50, 232–251, 264–286, 341–360, 373–392, 431–453, 466–488, 530–552, 565–582, 586–608, 620–642, 657–679, and 700–722; these read IARY…TPLL, AAMI…LHIL, PARW…WWHF, SIWM…WVIS, TSRA…WLPL, IGAL…LVAI, RFGV…IPIF, SIAR…AMSL, SRRI…MMFT, WTHH…AVAV, TVFA…GWWY, WRWS…AAWF, and LAGI…EVVS. The segment covering 817–831 has biased composition (low complexity); the sequence is GSEPGTEGGTTAAPG. Positions 817-836 are disordered; it reads GSEPGTEGGTTAAPGINGSR.

The protein belongs to the emb family.

The protein localises to the cell membrane. In terms of biological role, arabinosyl transferase responsible for the polymerization of arabinose into the arabinan of arabinogalactan. The polypeptide is Probable arabinosyltransferase C (embC) (Mycobacterium tuberculosis (strain CDC 1551 / Oshkosh)).